The chain runs to 301 residues: Homoserine O-acetyltransferase (301 aa).

C142 functions as the Acyl-thioester intermediate in the catalytic mechanism. Substrate is bound by residues K163 and S192. Residue H235 is the Proton acceptor of the active site. E237 is an active-site residue. A substrate-binding site is contributed by R249.

This sequence belongs to the MetA family.

Its subcellular location is the cytoplasm. It catalyses the reaction L-homoserine + acetyl-CoA = O-acetyl-L-homoserine + CoA. It functions in the pathway amino-acid biosynthesis; L-methionine biosynthesis via de novo pathway; O-acetyl-L-homoserine from L-homoserine: step 1/1. Its function is as follows. Transfers an acetyl group from acetyl-CoA to L-homoserine, forming acetyl-L-homoserine. In Novosphingobium aromaticivorans (strain ATCC 700278 / DSM 12444 / CCUG 56034 / CIP 105152 / NBRC 16084 / F199), this protein is Homoserine O-acetyltransferase.